The chain runs to 231 residues: NADH-ubiquinone oxidoreductase chain 4 (231 aa).

6 helical membrane passes run 1 to 21 (PIAG…YGII), 34 to 54 (VFLP…LTCL), 61 to 80 (SLIA…AIMI), 84 to 106 (WGLS…LFCL), 118 to 138 (ILIL…WWLL), and 169 to 189 (TIIL…HMFL).

The protein belongs to the complex I subunit 4 family.

Its subcellular location is the mitochondrion membrane. The catalysed reaction is a ubiquinone + NADH + 5 H(+)(in) = a ubiquinol + NAD(+) + 4 H(+)(out). Its function is as follows. Core subunit of the mitochondrial membrane respiratory chain NADH dehydrogenase (Complex I) that is believed to belong to the minimal assembly required for catalysis. Complex I functions in the transfer of electrons from NADH to the respiratory chain. The immediate electron acceptor for the enzyme is believed to be ubiquinone. This is NADH-ubiquinone oxidoreductase chain 4 (MT-ND4) from Porthidium nasutum (Hognosed pitviper).